Consider the following 248-residue polypeptide: Glucosamine-6-phosphate isomerase (248 aa).

Asp-68 serves as the catalytic Proton acceptor; for enolization step. The active-site For ring-opening step is Glu-137. His-139 (proton acceptor; for ring-opening step) is an active-site residue. The For ring-opening step role is filled by Glu-144.

This sequence belongs to the glucosamine/galactosamine-6-phosphate isomerase family. Monomer.

The enzyme catalyses alpha-D-glucosamine 6-phosphate + H2O = beta-D-fructose 6-phosphate + NH4(+). The sequence is that of Glucosamine-6-phosphate isomerase (NAG1) from Candida albicans (strain SC5314 / ATCC MYA-2876) (Yeast).